We begin with the raw amino-acid sequence, 155 residues long: Small ribosomal subunit protein uS7c (155 aa).

It belongs to the universal ribosomal protein uS7 family. In terms of assembly, part of the 30S ribosomal subunit.

It localises to the plastid. Its subcellular location is the chloroplast. One of the primary rRNA binding proteins, it binds directly to 16S rRNA where it nucleates assembly of the head domain of the 30S subunit. This Sagittaria latifolia (Broadleaf arrowhead) protein is Small ribosomal subunit protein uS7c (rps7).